The following is a 629-amino-acid chain: 1-deoxy-D-xylulose-5-phosphate synthase (629 aa).

Residues His79 and 119 to 121 contribute to the thiamine diphosphate site; that span reads SHA. Asp150 is a Mg(2+) binding site. Thiamine diphosphate-binding positions include 151–152, Asn180, Tyr292, and Glu377; that span reads GS. Asn180 contributes to the Mg(2+) binding site.

The protein belongs to the transketolase family. DXPS subfamily. As to quaternary structure, homodimer. Requires Mg(2+) as cofactor. The cofactor is thiamine diphosphate.

It carries out the reaction D-glyceraldehyde 3-phosphate + pyruvate + H(+) = 1-deoxy-D-xylulose 5-phosphate + CO2. It functions in the pathway metabolic intermediate biosynthesis; 1-deoxy-D-xylulose 5-phosphate biosynthesis; 1-deoxy-D-xylulose 5-phosphate from D-glyceraldehyde 3-phosphate and pyruvate: step 1/1. Its function is as follows. Catalyzes the acyloin condensation reaction between C atoms 2 and 3 of pyruvate and glyceraldehyde 3-phosphate to yield 1-deoxy-D-xylulose-5-phosphate (DXP). The chain is 1-deoxy-D-xylulose-5-phosphate synthase from Tropheryma whipplei (strain TW08/27) (Whipple's bacillus).